A 186-amino-acid polypeptide reads, in one-letter code: TATA box-binding protein-like 1 (186 aa).

This sequence belongs to the TBP family.

The protein resides in the cytoplasm. It localises to the nucleus. Its function is as follows. Part of a specialized transcription system that mediates the transcription of most ribosomal proteins through the 5'-TCT-3' motif which is a core promoter element at these genes. Seems to also mediate the transcription of NF1. Does not bind the TATA box. Members of the TBP family are differentially required to regulate transcription and development during early embryogenesis. Particularly regulates genes that have a role in catabolism. In Xenopus tropicalis (Western clawed frog), this protein is TATA box-binding protein-like 1 (tbpl1).